The sequence spans 227 residues: N-acetyltransferase 8 (227 aa).

The Cytoplasmic portion of the chain corresponds to 1–42 (MAPCHIRKYQESDRQWVVGLLSRGMAEHAPATFRQLLKLPRT). A helical; Signal-anchor for type II membrane protein transmembrane segment spans residues 43 to 63 (LILLLGGPLALLLVSGSWLLA). The 160-residue stretch at 61 to 220 (LLALVFSISL…HTVHFIYHLP (160 aa)) folds into the N-acetyltransferase domain. Over 64–227 (LVFSISLFPA…HLPSSKVGSL (164 aa)) the chain is Lumenal.

The protein belongs to the NAT8 family. Preferentially expressed in liver and kidney. Also detected in brain (at protein level).

It is found in the endoplasmic reticulum-Golgi intermediate compartment membrane. It localises to the endoplasmic reticulum membrane. The enzyme catalyses L-lysyl-[protein] + acetyl-CoA = N(6)-acetyl-L-lysyl-[protein] + CoA + H(+). The catalysed reaction is an S-substituted L-cysteine + acetyl-CoA = an N-acetyl-L-cysteine-S-conjugate + CoA + H(+). It participates in sulfur metabolism; glutathione metabolism. Its function is as follows. Endoplasmic reticulum (ER)-membrane-bound lysine N-acetyltransferase catalyzing the N6-acetylation of lysine residues in the lumen of the ER in various proteins, including PROM1 and BACE1, using acetyl-CoA as acetyl donor. Thereby, may regulate apoptosis through the acetylation and the regulation of the expression of PROM1. May also regulate amyloid beta-peptide secretion through acetylation of BACE1 and the regulation of its expression in neurons. N(6)-lysine acetylation in the ER maintains protein homeostasis and regulates reticulophagy. Alternatively, acetylates the free alpha-amino group of cysteine S-conjugates to form mercapturic acids. This is the final step in a major route for detoxification of a wide variety of reactive electrophiles which starts with their incorporation into glutathione S-conjugates. The glutathione S-conjugates are then further processed into cysteine S-conjugates and finally mercapturic acids which are water soluble and can be readily excreted in urine or bile. This Homo sapiens (Human) protein is N-acetyltransferase 8.